A 184-amino-acid chain; its full sequence is Endoribonuclease YbeY (184 aa).

Composition is skewed to acidic residues over residues 1–11 (MTVEVGADENP) and 19–29 (DGAGDESDDED). A disordered region spans residues 1–38 (MTVEVGADENPDFAHDETDGAGDESDDEDAQGRDPELD). Residues H146, H150, and H156 each coordinate Zn(2+).

This sequence belongs to the endoribonuclease YbeY family. The cofactor is Zn(2+).

Its subcellular location is the cytoplasm. Functionally, single strand-specific metallo-endoribonuclease involved in late-stage 70S ribosome quality control and in maturation of the 3' terminus of the 16S rRNA. The sequence is that of Endoribonuclease YbeY from Burkholderia pseudomallei (strain K96243).